Consider the following 190-residue polypeptide: Outer-membrane lipoprotein LolB (190 aa).

The first 16 residues, 1-16, serve as a signal peptide directing secretion; that stretch reads MRLRFSLLLTVSLLAG. Cysteine 17 is lipidated: N-palmitoyl cysteine. Residue cysteine 17 is the site of S-diacylglycerol cysteine attachment.

This sequence belongs to the LolB family. Monomer.

It is found in the cell outer membrane. Its function is as follows. Plays a critical role in the incorporation of lipoproteins in the outer membrane after they are released by the LolA protein. This is Outer-membrane lipoprotein LolB from Dechloromonas aromatica (strain RCB).